The following is a 179-amino-acid chain: Acireductone dioxygenase (179 aa).

The Fe(2+) site is built by H99, H101, E105, and H144. Ni(2+)-binding residues include H99, H101, E105, and H144.

This sequence belongs to the acireductone dioxygenase (ARD) family. In terms of assembly, monomer. Requires Fe(2+) as cofactor. The cofactor is Ni(2+).

It catalyses the reaction 1,2-dihydroxy-5-(methylsulfanyl)pent-1-en-3-one + O2 = 3-(methylsulfanyl)propanoate + CO + formate + 2 H(+). It carries out the reaction 1,2-dihydroxy-5-(methylsulfanyl)pent-1-en-3-one + O2 = 4-methylsulfanyl-2-oxobutanoate + formate + 2 H(+). The protein operates within amino-acid biosynthesis; L-methionine biosynthesis via salvage pathway; L-methionine from S-methyl-5-thio-alpha-D-ribose 1-phosphate: step 5/6. Its function is as follows. Catalyzes 2 different reactions between oxygen and the acireductone 1,2-dihydroxy-3-keto-5-methylthiopentene (DHK-MTPene) depending upon the metal bound in the active site. Fe-containing acireductone dioxygenase (Fe-ARD) produces formate and 2-keto-4-methylthiobutyrate (KMTB), the alpha-ketoacid precursor of methionine in the methionine recycle pathway. Ni-containing acireductone dioxygenase (Ni-ARD) produces methylthiopropionate, carbon monoxide and formate, and does not lie on the methionine recycle pathway. This is Acireductone dioxygenase from Exiguobacterium sibiricum (strain DSM 17290 / CCUG 55495 / CIP 109462 / JCM 13490 / 255-15).